The following is a 108-amino-acid chain: Zinc finger protein 475 (108 aa).

C2HC/C3H-type zinc fingers lie at residues 6–35 (PAVV…KWHN) and 79–108 (QLVP…KAAK). Zn(2+) is bound by residues cysteine 10, cysteine 13, histidine 25, cysteine 29, cysteine 83, cysteine 86, histidine 98, and cysteine 102.

Zn(2+) serves as cofactor.

In Homo sapiens (Human), this protein is Zinc finger protein 475.